A 436-amino-acid polypeptide reads, in one-letter code: 4-hydroxyphenylpyruvate dioxygenase (436 aa).

VOC domains lie at 38-194 (RFHH…GFEV) and 210-370 (RLDH…IFTK). Residues histidine 213, histidine 295, and glutamate 381 each contribute to the Fe cation site.

This sequence belongs to the 4HPPD family. Fe cation serves as cofactor.

The protein resides in the cytoplasm. It carries out the reaction 3-(4-hydroxyphenyl)pyruvate + O2 = homogentisate + CO2. It participates in amino-acid degradation; L-phenylalanine degradation; acetoacetate and fumarate from L-phenylalanine: step 3/6. The protein operates within cofactor biosynthesis; prenylquinone biosynthesis. The chain is 4-hydroxyphenylpyruvate dioxygenase from Plectranthus scutellarioides (Coleus).